A 366-amino-acid chain; its full sequence is Transcription factor IIIA (366 aa).

9 C2H2-type zinc fingers span residues 35–59 (YICS…LCKH), 65–89 (FPCK…SLTH), 95–120 (FTCD…NRFH), 127–151 (YVCH…QFSH), 157–181 (YECP…EKVH), 184–210 (YPCK…AECH), 214–236 (AVCD…QKTH), 243–268 (YLCP…QSFH), and 274–298 (FVCE…SVVH). At Ser-38 the chain carries Phosphoserine; by CK2. Residues 299 to 310 (DPEKRKLKEKCP) are compositionally biased toward basic and acidic residues. A disordered region spans residues 299-366 (DPEKRKLKEK…SLVLDKLTIQ (68 aa)). Position 336 is a phosphoserine; by CK2; in vitro (Ser-336).

Post-translationally, the N-terminus is blocked. Synthesized in oocytes and, in much lower levels, in somatic cells.

The protein resides in the nucleus. In terms of biological role, involved in ribosomal large subunit biogenesis. Acts both as a positive transcription factor for 5S RNA genes, and as a specific RNA binding protein that complexes with 5S RNA in oocytes to form the 7S ribonucleoprotein storage particle. May play an essential role in the developmental change in 5S RNA gene expression. Interacts with the internal control region (ICR) of approximately 50 bases within the 5S RNA genes, is required for correct transcription of these genes by RNA polymerase III. Also binds the transcribed 5S RNA's. This Xenopus laevis (African clawed frog) protein is Transcription factor IIIA (gtf3a).